The sequence spans 300 residues: Formate dehydrogenase-O iron-sulfur subunit (300 aa).

At 1-260 (MAYQSQDIIR…KFWKGIWKPL (260 aa)) the chain is on the cytoplasmic side. 4Fe-4S ferredoxin-type domains lie at 30–60 (VAKLIDVTTCIGCKACQVACSEWNDIRDTVG), 91–123 (LEWLIRKDGCMHCSDPGCLKACPAEGAIIQYAN), 124–153 (GIVDFQSEQCIGCGYCIAGCPFDIPRLNPE), and 158–189 (YKCTLCVDRVVVGQEPACVKTCPTGAIHFGTK). Residues Cys39, Cys42, Cys45, Cys49, Cys100, Cys103, Cys108, Cys112, Cys133, Cys136, Cys139, Cys143, Cys160, Cys163, Cys175, and Cys179 each contribute to the [4Fe-4S] cluster site. Residues 261-279 (AAVGFAATFAASIFHYVGV) form a helical membrane-spanning segment. Over 280-300 (GPNRADEEENNLHEEKDEERK) the chain is Periplasmic.

As to quaternary structure, formate dehydrogenase is a membrane-bound complex, formed by subunits alpha, beta and gamma. [4Fe-4S] cluster is required as a cofactor.

It localises to the cell membrane. Its function is as follows. Allows to use formate as major electron donor during aerobic respiration. The beta chain is an electron transfer unit containing 4 cysteine clusters involved in the formation of iron-sulfur centers. Electrons are transferred from the gamma chain to the molybdenum cofactor of the alpha subunit. In Escherichia coli (strain K12), this protein is Formate dehydrogenase-O iron-sulfur subunit (fdoH).